A 119-amino-acid chain; its full sequence is Putative mating-type protein A2 (119 aa).

The homeobox; TALE-type DNA-binding region spans lysine 38–threonine 100.

Belongs to the TALE/M-ATYP homeobox family.

Its subcellular location is the nucleus. Its function is as follows. Probably not a functional protein. Cells lacking A2 show no obvious alterations in mating, sporulation and cell growth. The polypeptide is Putative mating-type protein A2 (MATA2) (Saccharomyces cerevisiae (Baker's yeast)).